Reading from the N-terminus, the 495-residue chain is Cytochrome P450 monooxygenase 113 (495 aa).

A helical transmembrane segment spans residues 2-22 (FLQIAACFTVIGLLYGLVSNL). Position 428 (cysteine 428) interacts with heme.

The protein belongs to the cytochrome P450 family. Heme is required as a cofactor.

It localises to the membrane. It functions in the pathway secondary metabolite biosynthesis. In terms of biological role, cytochrome P450 monooxygenase that is able to use 4-ethoxybenzoic acid as a substrate for oxidation. This chain is Cytochrome P450 monooxygenase 113, found in Postia placenta (strain ATCC 44394 / Madison 698-R) (Brown rot fungus).